The primary structure comprises 324 residues: Ribosomal lysine N-methyltransferase 5 (324 aa).

S-adenosyl-L-methionine contacts are provided by residues Trp90, 140-142, Asp162, Trp217, and Met247; that span reads GSG.

Belongs to the class I-like SAM-binding methyltransferase superfamily. RKM5 family.

Functionally, S-adenosyl-L-methionine-dependent protein-lysine N-methyltransferase that methylates 60S ribosomal protein L1. The sequence is that of Ribosomal lysine N-methyltransferase 5 (RKM5) from Vanderwaltozyma polyspora (strain ATCC 22028 / DSM 70294 / BCRC 21397 / CBS 2163 / NBRC 10782 / NRRL Y-8283 / UCD 57-17) (Kluyveromyces polysporus).